The primary structure comprises 519 residues: Cytosol aminopeptidase (519 aa).

Lysine 45 is modified (N6-succinyllysine). Serine 54 carries the phosphoserine modification. N6-succinyllysine occurs at positions 61 and 103. Phosphoserine occurs at positions 180 and 194. Zn(2+)-binding residues include leucine 202 and methionine 203. Residue lysine 221 is modified to N6-acetyllysine; alternate. N6-succinyllysine; alternate is present on lysine 221. Serine 238 carries the post-translational modification Phosphoserine. 2 residues coordinate Zn(2+): lysine 282 and aspartate 287. Positions 282, 287, 292, and 294 each coordinate substrate. Aspartate 287 lines the Mg(2+) pocket. Lysine 294 is a catalytic residue. Zn(2+) contacts are provided by arginine 303, aspartate 305, aspartate 364, and glutamate 366. The substrate site is built by aspartate 305 and aspartate 364. The Mg(2+) site is built by aspartate 364 and glutamate 366. Residue arginine 368 is part of the active site. Position 455 is an N6-acetyllysine; alternate (lysine 455). Lysine 455 is modified (N6-succinyllysine; alternate). Residue lysine 476 is modified to N6-succinyllysine. An N6-acetyllysine; alternate modification is found at lysine 489. Lysine 489 carries the post-translational modification N6-succinyllysine; alternate.

The protein belongs to the peptidase M17 family. In terms of assembly, homohexamer. It depends on Zn(2+) as a cofactor. Requires Mn(2+) as cofactor.

The protein localises to the cytoplasm. It catalyses the reaction Release of an N-terminal amino acid, Xaa-|-Yaa-, in which Xaa is preferably Leu, but may be other amino acids including Pro although not Arg or Lys, and Yaa may be Pro. Amino acid amides and methyl esters are also readily hydrolyzed, but rates on arylamides are exceedingly low.. It carries out the reaction an S-substituted L-cysteinylglycine + H2O = an S-substituted L-cysteine + glycine. The catalysed reaction is L-cysteinylglycine + H2O = L-cysteine + glycine. The enzyme catalyses S-benzyl-L-cysteinylglycine + H2O = S-benzyl-L-cysteine + glycine. It catalyses the reaction Release of N-terminal proline from a peptide.. Cytosolic metallopeptidase that catalyzes the removal of unsubstituted N-terminal hydrophobic amino acids from various peptides. The presence of Zn(2+) ions is essential for the peptidase activity, and the association with other cofactors can modulate the substrate spectificity of the enzyme. For instance, in the presence of Mn(2+), it displays a specific Cys-Gly hydrolyzing activity of Cys-Gly-S-conjugates. Involved in the metabolism of glutathione and in the degradation of glutathione S-conjugates, which may play a role in the control of the cell redox status. This chain is Cytosol aminopeptidase, found in Mus musculus (Mouse).